Consider the following 328-residue polypeptide: L-lactate dehydrogenase (328 aa).

NAD(+) is bound by residues Val18, Glu39, Lys46, Tyr71, and 85-86; that span reads GA. Positions 88 and 94 each coordinate substrate. NAD(+) contacts are provided by residues Ser107, 124–126, and Ser149; that span reads AAN. Substrate is bound at residue 126 to 129; that stretch reads NPVD. 154–157 is a binding site for substrate; that stretch reads DSAR. Arg159 and His174 together coordinate beta-D-fructose 1,6-bisphosphate. Residue His181 is the Proton acceptor of the active site. Tyr226 carries the phosphotyrosine modification. Substrate is bound at residue Thr235.

The protein belongs to the LDH/MDH superfamily. LDH family. As to quaternary structure, homotetramer.

It is found in the cytoplasm. It carries out the reaction (S)-lactate + NAD(+) = pyruvate + NADH + H(+). Its pathway is fermentation; pyruvate fermentation to lactate; (S)-lactate from pyruvate: step 1/1. With respect to regulation, allosterically activated by fructose 1,6-bisphosphate (FBP). Catalyzes the conversion of lactate to pyruvate. The protein is L-lactate dehydrogenase of Streptococcus sanguinis (strain SK36).